Reading from the N-terminus, the 361-residue chain is Putative agmatine deiminase (361 aa).

Cys-354 serves as the catalytic Amidino-cysteine intermediate.

It belongs to the agmatine deiminase family.

The enzyme catalyses agmatine + H2O = N-carbamoylputrescine + NH4(+). The polypeptide is Putative agmatine deiminase (Streptococcus pneumoniae (strain P1031)).